The primary structure comprises 147 residues: Large ribosomal subunit protein uL15 (147 aa).

The tract at residues 1-42 is disordered; that stretch reads MTIKVHHLRPAPGAKTAKTRVGRGEGSKGKTAGRGTKGSKAR.

The protein belongs to the universal ribosomal protein uL15 family. As to quaternary structure, part of the 50S ribosomal subunit.

Its function is as follows. Binds to the 23S rRNA. This chain is Large ribosomal subunit protein uL15, found in Salinispora arenicola (strain CNS-205).